We begin with the raw amino-acid sequence, 346 residues long: uncharacterized protein (346 aa).

Residues 10 to 109 (WDFIMTDPSS…SNSNGNNSPV (100 aa)) are disordered. Positions 26–44 (KGSSKNGSPKTSSPKSGSP) are enriched in low complexity. The segment covering 56–67 (NQQLLQNDSINL) has biased composition (polar residues). Residues 94–109 (KSSVVPSNSNGNNSPV) are compositionally biased toward low complexity.

This is an uncharacterized protein from Dictyostelium discoideum (Social amoeba).